Here is a 178-residue protein sequence, read N- to C-terminus: Large ribosomal subunit protein uL6 (178 aa).

The protein belongs to the universal ribosomal protein uL6 family. In terms of assembly, part of the 50S ribosomal subunit.

Functionally, this protein binds to the 23S rRNA, and is important in its secondary structure. It is located near the subunit interface in the base of the L7/L12 stalk, and near the tRNA binding site of the peptidyltransferase center. This chain is Large ribosomal subunit protein uL6, found in Limosilactobacillus reuteri (strain DSM 20016) (Lactobacillus reuteri).